The primary structure comprises 137 residues: 1,4-dihydroxy-2-naphthoyl-CoA hydrolase (137 aa).

The active site involves D12.

The protein belongs to the 4-hydroxybenzoyl-CoA thioesterase family. DHNA-CoA hydrolase subfamily.

The enzyme catalyses 1,4-dihydroxy-2-naphthoyl-CoA + H2O = 1,4-dihydroxy-2-naphthoate + CoA + H(+). It functions in the pathway cofactor biosynthesis; phylloquinone biosynthesis. Its pathway is quinol/quinone metabolism; 1,4-dihydroxy-2-naphthoate biosynthesis; 1,4-dihydroxy-2-naphthoate from chorismate: step 7/7. Its function is as follows. Catalyzes the hydrolysis of 1,4-dihydroxy-2-naphthoyl-CoA (DHNA-CoA) to 1,4-dihydroxy-2-naphthoate (DHNA), a reaction involved in phylloquinone (vitamin K1) biosynthesis. This Acaryochloris marina (strain MBIC 11017) protein is 1,4-dihydroxy-2-naphthoyl-CoA hydrolase.